Here is a 332-residue protein sequence, read N- to C-terminus: Biotin synthase (332 aa).

The Radical SAM core domain maps to 51–279 (YKVQLASLLS…RSRVRLSAGR (229 aa)). The [4Fe-4S] cluster site is built by Cys-66, Cys-70, and Cys-73. Residues Cys-110, Cys-142, Cys-202, and Arg-274 each contribute to the [2Fe-2S] cluster site.

This sequence belongs to the radical SAM superfamily. Biotin synthase family. As to quaternary structure, homodimer. It depends on [4Fe-4S] cluster as a cofactor. The cofactor is [2Fe-2S] cluster.

It carries out the reaction (4R,5S)-dethiobiotin + (sulfur carrier)-SH + 2 reduced [2Fe-2S]-[ferredoxin] + 2 S-adenosyl-L-methionine = (sulfur carrier)-H + biotin + 2 5'-deoxyadenosine + 2 L-methionine + 2 oxidized [2Fe-2S]-[ferredoxin]. It participates in cofactor biosynthesis; biotin biosynthesis; biotin from 7,8-diaminononanoate: step 2/2. Functionally, catalyzes the conversion of dethiobiotin (DTB) to biotin by the insertion of a sulfur atom into dethiobiotin via a radical-based mechanism. This Prochlorococcus marinus (strain SARG / CCMP1375 / SS120) protein is Biotin synthase.